Here is a 78-residue protein sequence, read N- to C-terminus: DNA-directed RNA polymerase subunit Rpo5 (78 aa).

Belongs to the archaeal Rpo5/eukaryotic RPB5 RNA polymerase subunit family. In terms of assembly, part of the RNA polymerase complex.

The protein localises to the cytoplasm. It carries out the reaction RNA(n) + a ribonucleoside 5'-triphosphate = RNA(n+1) + diphosphate. DNA-dependent RNA polymerase (RNAP) catalyzes the transcription of DNA into RNA using the four ribonucleoside triphosphates as substrates. The chain is DNA-directed RNA polymerase subunit Rpo5 from Methanococcus maripaludis (strain C7 / ATCC BAA-1331).